We begin with the raw amino-acid sequence, 1023 residues long: Probable histidine kinase 3 (1023 aa).

The Cytoplasmic portion of the chain corresponds to 1–80 (MDEMSCGGGG…RGWRVVRETW (80 aa)). The chain crosses the membrane as a helical span at residues 81–101 (WWVLLLWILAGSLGSFYLFLF). The Extracellular segment spans residues 102-387 (MNAQSLDKRR…CRFEKKPPWP (286 aa)). The region spanning 151 to 352 (TPSAIDQMTF…TNESPISMYG (202 aa)) is the CHASE domain. Residues 388–408 (WLAITSSFGTLVIALLTGHIF) form a helical membrane-spanning segment. At 409–1023 (QATVHRIAKV…RFFQNHDQVE (615 aa)) the chain is on the cytoplasmic side. One can recognise a Histidine kinase domain in the interval 445–715 (TVSHEIRTPM…TFTFTAVLMR (271 aa)). At His448 the chain carries Phosphohistidine; by autocatalysis. Response regulatory domains lie at 732–854 (NALV…RRAL) and 880–1016 (QIIV…ARFF). A 4-aspartylphosphate modification is found at Asp783. The segment at 812-831 (LFLLGSSASSPKGGSDTSRE) is disordered. The segment covering 817–827 (SSASSPKGGSD) has biased composition (polar residues). Residue Asp930 is modified to 4-aspartylphosphate.

Activation probably requires a transfer of a phosphate group between a His in the transmitter domain and an Asp of the receiver domain. Highly expressed in young leaves and at lower levels in roots, mature leaves, stems and spikelets.

Its subcellular location is the cell membrane. It carries out the reaction ATP + protein L-histidine = ADP + protein N-phospho-L-histidine.. Its function is as follows. Cytokinin receptor related to bacterial two-component regulators. Functions as a histidine kinase and transmits the stress signal to a downstream MAPK cascade. This Oryza sativa subsp. japonica (Rice) protein is Probable histidine kinase 3.